A 259-amino-acid chain; its full sequence is Ribonuclease PH (259 aa).

Phosphate contacts are provided by residues R88 and 126 to 128 (GTR).

It belongs to the RNase PH family. Homohexameric ring arranged as a trimer of dimers.

The enzyme catalyses tRNA(n+1) + phosphate = tRNA(n) + a ribonucleoside 5'-diphosphate. Phosphorolytic 3'-5' exoribonuclease that plays an important role in tRNA 3'-end maturation. Removes nucleotide residues following the 3'-CCA terminus of tRNAs; can also add nucleotides to the ends of RNA molecules by using nucleoside diphosphates as substrates, but this may not be physiologically important. Probably plays a role in initiation of 16S rRNA degradation (leading to ribosome degradation) during starvation. This Mycobacterium leprae (strain Br4923) protein is Ribonuclease PH.